Consider the following 523-residue polypeptide: Bifunctional purine biosynthesis protein PurH (523 aa).

The MGS-like domain occupies 4 to 152 (DHIRRPIRRA…KNHPSVAVVT (149 aa)).

The protein belongs to the PurH family.

The enzyme catalyses (6R)-10-formyltetrahydrofolate + 5-amino-1-(5-phospho-beta-D-ribosyl)imidazole-4-carboxamide = 5-formamido-1-(5-phospho-D-ribosyl)imidazole-4-carboxamide + (6S)-5,6,7,8-tetrahydrofolate. It catalyses the reaction IMP + H2O = 5-formamido-1-(5-phospho-D-ribosyl)imidazole-4-carboxamide. It functions in the pathway purine metabolism; IMP biosynthesis via de novo pathway; 5-formamido-1-(5-phospho-D-ribosyl)imidazole-4-carboxamide from 5-amino-1-(5-phospho-D-ribosyl)imidazole-4-carboxamide (10-formyl THF route): step 1/1. It participates in purine metabolism; IMP biosynthesis via de novo pathway; IMP from 5-formamido-1-(5-phospho-D-ribosyl)imidazole-4-carboxamide: step 1/1. This is Bifunctional purine biosynthesis protein PurH from Mycobacterium marinum (strain ATCC BAA-535 / M).